The primary structure comprises 1173 residues: Rac guanine nucleotide exchange factor JJ (1173 aa).

Disordered regions lie at residues 1 to 380 (MSYE…NQTQ), 458 to 479 (KDQL…LKQM), and 712 to 765 (DDQN…QQQQ). Composition is skewed to low complexity over residues 8-23 (QQQQ…QQQQ) and 35-45 (QQQQHPQPQYP). Over residues 50 to 62 (TAQSNDSQQQHYG) the composition is skewed to polar residues. 2 stretches are compositionally biased toward low complexity: residues 72-82 (TTSTTQQQQQQ) and 98-118 (QYDQ…NYDY). Polar residues predominate over residues 119 to 133 (SNTSGNRNSGQYDQY). Composition is skewed to low complexity over residues 134–143 (TTTNTTSANT), 153–191 (SPTP…TSTN), and 208–219 (SQTQQQHSPTSS). Residues 220 to 239 (YDYSQVTNNTATNYDSYYQQ) are compositionally biased toward polar residues. Over residues 240–258 (PTTPTSTSSSSSTTTTTTT) the composition is skewed to low complexity. A compositionally biased stretch (basic and acidic residues) spans 262-277 (SKFEKSQSLKNMDHFI). Residues 280–295 (TPSNTPSATINSWDYN) show a composition bias toward polar residues. Residues 296 to 380 (QQQPQPQQPQ…NTDTYSNQTQ (85 aa)) show a composition bias toward low complexity. The span at 470 to 479 (KKGEEDLKQM) shows a compositional bias: basic and acidic residues. Over residues 743-765 (QQPQPQQEQPPQQQQQQQQQQQQ) the composition is skewed to low complexity. An IQ domain is found at 793 to 822 (RFGDIIRVQRVSRKWLARKKFKDLVKMKLL). A DH domain is found at 833–1016 (NRFKSVNELY…KDINKYINDR (184 aa)). The region spanning 1044-1146 (RYFVRESQCN…WLQDLSVELK (103 aa)) is the PH domain.

GTPase-activating protein. The protein is Rac guanine nucleotide exchange factor JJ (gxcJJ) of Dictyostelium discoideum (Social amoeba).